A 421-amino-acid chain; its full sequence is UPF0300 protein C737.04 (421 aa).

It belongs to the UPF0300 family.

The protein localises to the cytoplasm. In Schizosaccharomyces pombe (strain 972 / ATCC 24843) (Fission yeast), this protein is UPF0300 protein C737.04.